A 747-amino-acid chain; its full sequence is MCGLAGIINLAAPRSQECTFHILKGMADAISYRGPDDEQYHIDSKVGFAFRRLSILDLVNGQQPFLNEDGSIVVMVNGEIYNYKELKASLHNHMFKTTSDCEVIVHLYEEKGIGFVDDIIGMFSIAIWDKNKNKVFLVRDRFGIKPLFYTELKHELIFASEIKSLFSHPHCPRQFNWKEALSDIWLSGEAASNHKETTSFFVNIQNLDAGHYLEINLTTNERKTASYWSLQDILLRQGYRENLHPDDLIEGYRELLADSVHRCLQSDVEVGLFLSGGIDSAAVAHFAAEKQDLHTFTVLSQSTFTNEDAKYAHWLAKDLHLPNHQVLYQLGNDELLQPESYKHLLWICETPFCGPEQLYKFHLHKYAKAIRPNLKVMLTGQGSDEFNGGYSTTLSPAENPSWEGFIESVNTMEMNRLHRLQGNIFRVWEEHFGLSPINLSYLKSNDSSQADPWQSYVLTKYRDLQMYNCWHEDRIAAANHIENRVPFLDHRLVEWVCGIPDGLRKDLLWDKSVLRKSLTNELHTSYTHRPKVPFFYGKDVRYTHKMMFHLLKKNNYQLIEEAFSHSDASSIIQVEHIHAIMTYLEDDPEFTNFEFLLRLVNMGLLSKMTKETPSVQLDITSHLESITIKDWHSQEGDIASRLNISANKCEGQDILALNPGVTLLRPESDSEHCIYIAEEGFIQFIVSEEDVGAWLHILCDINGKDTLHTILDRHGVSLEEVAKYIQEAIEHNIILIKQKNLPEGAYR.

The active-site For GATase activity is the Cys2. Residues 2-218 (CGLAGIINLA…AGHYLEINLT (217 aa)) enclose the Glutamine amidotransferase type-2 domain. Residues 52–56 (RLSIL), 77–79 (NGE), and Asp100 contribute to the L-glutamine site. 395 to 396 (SP) provides a ligand contact to ATP.

The protein belongs to the asparagine synthetase family.

It catalyses the reaction L-aspartate + L-glutamine + ATP + H2O = L-asparagine + L-glutamate + AMP + diphosphate + H(+). The protein operates within amino-acid biosynthesis; L-asparagine biosynthesis; L-asparagine from L-aspartate (L-Gln route): step 1/1. This is Asparagine synthetase [glutamine-hydrolyzing] 2 (asnH) from Bacillus subtilis (strain 168).